A 352-amino-acid polypeptide reads, in one-letter code: S-adenosylmethionine:tRNA ribosyltransferase-isomerase (352 aa).

This sequence belongs to the QueA family. Monomer.

The protein localises to the cytoplasm. It catalyses the reaction 7-aminomethyl-7-carbaguanosine(34) in tRNA + S-adenosyl-L-methionine = epoxyqueuosine(34) in tRNA + adenine + L-methionine + 2 H(+). It functions in the pathway tRNA modification; tRNA-queuosine biosynthesis. Functionally, transfers and isomerizes the ribose moiety from AdoMet to the 7-aminomethyl group of 7-deazaguanine (preQ1-tRNA) to give epoxyqueuosine (oQ-tRNA). This is S-adenosylmethionine:tRNA ribosyltransferase-isomerase from Cupriavidus necator (strain ATCC 17699 / DSM 428 / KCTC 22496 / NCIMB 10442 / H16 / Stanier 337) (Ralstonia eutropha).